Here is a 366-residue protein sequence, read N- to C-terminus: Protein FAM131A (366 aa).

A disordered region spans residues 342–366 (QRQASDLASSGVVSLDEDEAEPEEQ). Acidic residues predominate over residues 356-366 (LDEDEAEPEEQ).

The protein belongs to the FAM131 family.

This chain is Protein FAM131A (FAM131A), found in Homo sapiens (Human).